Here is a 358-residue protein sequence, read N- to C-terminus: CCAAT/enhancer-binding protein alpha (358 aa).

The interval 1–55 (MESADFYEAEPRPPMSSHLQSPPHAPSSAAFGFPRGAGPAQPPAPPAAPEPLGGI) is disordered. Residues 1–70 (MESADFYEAE…SIDISAYIDP (70 aa)) form a required to repress E2F1:TFDP1-mediated transcription, to inhibit cell cycle and to induce adipocyte differentiation region. Positions 29 to 39 (AAFGFPRGAGP) are enriched in low complexity. Residues 40–49 (AQPPAPPAAP) are compositionally biased toward pro residues. Residues 54-72 (GICEHETSIDISAYIDPAA) form a required for interaction with TRIB1 region. Residues 128 to 204 (PPGYGCAAAG…HPPPAHLAAP (77 aa)) are required to induce adipocyte differentiation. An N6-acetyllysine; alternate modification is found at K161. K161 is covalently cross-linked (Glycyl lysine isopeptide (Lys-Gly) (interchain with G-Cter in SUMO2); alternate). Disordered regions lie at residues 178–201 (LFPYQPPPPPPPSHPHPHPPPAHL) and 217–291 (TMHL…RRER). 2 stretches are compositionally biased toward pro residues: residues 181 to 199 (YQPPPPPPPSHPHPHPPPA) and 224 to 238 (HPTPPPTPVPSPHPA). Positions 182-198 (QPPPPPPPSHPHPHPPP) are required to functionally cooperate with SREBF1 in promoter activation. S190 bears the Phosphoserine mark. Residues T226 and T230 each carry the phosphothreonine; by GSK3 modification. S234 bears the Phosphoserine; by GSK3 mark. Low complexity predominate over residues 239–259 (PALGAAGLPGPGSALKGLGAA). Residues 244 to 358 (AGLPGPGSAL…SLVKAMGNCA (115 aa)) form an interaction with FOXO1 region. Over residues 276–291 (KSVDKNSNEYRVRRER) the composition is skewed to basic and acidic residues. The bZIP domain maps to 282 to 345 (SNEYRVRRER…DTLRGIFRQL (64 aa)). A DNA-binding region spans residues 285 to 300 (YRVRRERNNIAVRKSR). The interval 286 to 313 (RVRRERNNIAVRKSRDKAKQRNVETQQK) is basic motif. The interval 317–345 (LTSDNDRLRKRVEQLSRELDTLRGIFRQL) is leucine-zipper.

This sequence belongs to the bZIP family. C/EBP subfamily. In terms of assembly, binds DNA as a homodimer and as a heterodimer. Can form stable heterodimers with CEBPB, CEBPD, CEBPE and CEBPG. Interacts with PRDM16. Interacts with UBN1. Interacts with ZNF638; this interaction increases transcriptional activation. Interacts with the complex TFDP2:E2F1; the interaction prevents CEBPA binding to target gene promoters and represses its transcriptional activity. Interacts with RB1. Interacts (when phosphorylated at Ser-190) with CDK2, CDK4, E2F4 and SMARCA2. Interacts with SREBPF1. Interacts with FOXO1 (via the Fork-head domain); the interaction increases when FOXO1 is deacetylated. Interacts with SIX1. Interacts (via recognition sequence) with TRIB1. Interacts (via bZIP domain) with OVOL2 (via zinc-finger domains); the interaction inhibits the transcription factor activity of CEBPA and is required to repress adipogenesis. Interacts with TAF1A and UBTF. As to quaternary structure, interacts with TAF1A and UBTF. Interacts with NPM1. In terms of assembly, (Microbial infection) Interacts with HBV protein X. (Microbial infection) Interacts with Epstein-Barr virus lytic switch protein BZLF1; this interaction induces G1 cell cycle arrest. In terms of processing, phosphorylation at Ser-190 is required for interaction with CDK2, CDK4 and SWI/SNF complex leading to cell cycle inhibition. Dephosphorylated at Ser-190 by protein phosphatase 2A (PP2A) through PI3K/AKT signaling pathway regulation. Phosphorylation at Thr-226 and Thr-230 by GSK3 is constitutive in adipose tissue and lung. In liver, both Thr-226 and Thr-230 are phosphorylated only during feeding but not during fasting. Phosphorylation of the GSK3 consensus sites selectively decreases transactivation activity on IRE-controlled promoters. Sumoylated, sumoylation blocks the inhibitory effect on cell proliferation by disrupting the interaction with SMARCA2. Post-translationally, ubiquitinated by COP1 upon interaction with TRIB1.

The protein resides in the nucleus. It localises to the nucleolus. Its function is as follows. Transcription factor that coordinates proliferation arrest and the differentiation of myeloid progenitors, adipocytes, hepatocytes, and cells of the lung and the placenta. Binds directly to the consensus DNA sequence 5'-T[TG]NNGNAA[TG]-3' acting as an activator on distinct target genes. During early embryogenesis, plays essential and redundant functions with CEBPB. Essential for the transition from common myeloid progenitors (CMP) to granulocyte/monocyte progenitors (GMP). Critical for the proper development of the liver and the lung. Necessary for terminal adipocyte differentiation, is required for postnatal maintenance of systemic energy homeostasis and lipid storage. To regulate these different processes at the proper moment and tissue, interplays with other transcription factors and modulators. Down-regulates the expression of genes that maintain cells in an undifferentiated and proliferative state through E2F1 repression, which is critical for its ability to induce adipocyte and granulocyte terminal differentiation. Reciprocally E2F1 blocks adipocyte differentiation by binding to specific promoters and repressing CEBPA binding to its target gene promoters. Proliferation arrest also depends on a functional binding to SWI/SNF complex. In liver, regulates gluconeogenesis and lipogenesis through different mechanisms. To regulate gluconeogenesis, functionally cooperates with FOXO1 binding to IRE-controlled promoters and regulating the expression of target genes such as PCK1 or G6PC1. To modulate lipogenesis, interacts and transcriptionally synergizes with SREBF1 in promoter activation of specific lipogenic target genes such as ACAS2. In adipose tissue, seems to act as FOXO1 coactivator accessing to ADIPOQ promoter through FOXO1 binding sites. In terms of biological role, can act as dominant-negative. Binds DNA and have transctivation activity, even if much less efficiently than isoform 2. Does not inhibit cell proliferation. Directly and specifically enhances ribosomal DNA transcription interacting with RNA polymerase I-specific cofactors and inducing histone acetylation. The polypeptide is CCAAT/enhancer-binding protein alpha (Homo sapiens (Human)).